A 237-amino-acid polypeptide reads, in one-letter code: Ribosomal RNA small subunit methyltransferase G (237 aa).

Residues Gly-79, 130–131 (CE), and Arg-147 each bind S-adenosyl-L-methionine.

The protein belongs to the methyltransferase superfamily. RNA methyltransferase RsmG family.

It localises to the cytoplasm. Functionally, specifically methylates the N7 position of a guanine in 16S rRNA. In Malacoplasma penetrans (strain HF-2) (Mycoplasma penetrans), this protein is Ribosomal RNA small subunit methyltransferase G.